Here is a 774-residue protein sequence, read N- to C-terminus: Transmembrane GTPase fzo-1 (774 aa).

The disordered stretch occupies residues 1–29 (MSGTASLVHTLPASGDSNHRGLHSLKNSR). The Cytoplasmic segment spans residues 1-617 (MSGTASLVHT…EEQAMMTQMV (617 aa)). Basic residues predominate over residues 20–29 (RGLHSLKNSR). Residues 51-71 (YGELKDNVAELEGVYKDIKEN) are a coiled coil. One can recognise a Dynamin-type G domain in the interval 97 to 352 (QRDNMKVVFF…TRALEFQNFE (256 aa)). Residues 107 to 114 (GRTSNGKS) form a G1 motif region. 110 to 115 (SNGKST) contributes to the GTP binding site. The segment at 133 to 134 (TT) is G2 motif. Residues 211-214 (DSPG) form a G3 motif region. 270 to 273 (NRWD) provides a ligand contact to GTP. Residues 270 to 273 (NRWD) form a G4 motif region. Position 300 (Glu-300) is a region of interest, G5 motif. A GTP-binding site is contributed by Ser-317. Positions 385 to 415 (NLNSVLTSAAEQRSKLQNNLNESTRTFNECR) form a coiled coil. Residues 618–638 (LTSAAFLANGSLGVLVVGGIV) traverse the membrane as a helical segment. Residues 639-640 (YK) lie on the Mitochondrial intermembrane side of the membrane. A helical transmembrane segment spans residues 641 to 661 (AVGWRVIAVGGAAYAGLYAWE). The Cytoplasmic segment spans residues 662–774 (RMRWNSGAKE…YLRSDSPPTP (113 aa)).

The protein belongs to the TRAFAC class dynamin-like GTPase superfamily. Dynamin/Fzo/YdjA family. Mitofusin subfamily. As to quaternary structure, interacts with ced-9; interaction may be suppressed by interaction of ced-9 with egl-1.

It localises to the mitochondrion outer membrane. It catalyses the reaction GTP + H2O = GDP + phosphate + H(+). Its function is as follows. Probable transmembrane GTPase. Mediates mitochondrial fusion. Fusion of mitochondria occurs in many cell types and constitutes an important step in mitochondria morphology, which is balanced between fusion and fission. Dispensable for normal apoptotic processes during embryonic development. The sequence is that of Transmembrane GTPase fzo-1 from Caenorhabditis elegans.